A 243-amino-acid polypeptide reads, in one-letter code: Ubiquinone biosynthesis O-methyltransferase (243 aa).

The S-adenosyl-L-methionine site is built by R44, G64, D85, and M129.

The protein belongs to the methyltransferase superfamily. UbiG/COQ3 family.

It catalyses the reaction a 3-demethylubiquinol + S-adenosyl-L-methionine = a ubiquinol + S-adenosyl-L-homocysteine + H(+). It carries out the reaction a 3-(all-trans-polyprenyl)benzene-1,2-diol + S-adenosyl-L-methionine = a 2-methoxy-6-(all-trans-polyprenyl)phenol + S-adenosyl-L-homocysteine + H(+). Its pathway is cofactor biosynthesis; ubiquinone biosynthesis. O-methyltransferase that catalyzes the 2 O-methylation steps in the ubiquinone biosynthetic pathway. The polypeptide is Ubiquinone biosynthesis O-methyltransferase (Erwinia tasmaniensis (strain DSM 17950 / CFBP 7177 / CIP 109463 / NCPPB 4357 / Et1/99)).